The chain runs to 146 residues: DNA-binding protein Rv2175c (146 aa).

Residues 1 to 27 (MPGRAPGSTLARVGSIPAGDDVLDPDE) are disordered. Position 9 is a phosphothreonine (T9).

In terms of assembly, monomer in solution. May form homodimers. Interacts with phosphorylated PknL. Phosphorylated by PknL. Phosphorylation negatively regulates DNA-binding activity.

Its function is as follows. Binds DNA at low salt concentrations. This is DNA-binding protein Rv2175c from Mycobacterium tuberculosis (strain ATCC 25618 / H37Rv).